The primary structure comprises 255 residues: Biotin carboxyl carrier protein of acetyl-CoA carboxylase 2, chloroplastic (255 aa).

The N-terminal 87 residues, 1 to 87, are a transit peptide targeting the chloroplast; that stretch reads MASLSVPCVK…TNVPEPAELS (87 aa). The disordered stretch occupies residues 148–193; that stretch reads PPAQPVALPPSPTPTSTPATAKPTSAPSSSHPPLKSPMAGTFYRSP. The span at 149–162 shows a compositional bias: pro residues; it reads PAQPVALPPSPTPT. Over residues 163–180 the composition is skewed to low complexity; it reads STPATAKPTSAPSSSHPP. Residues 178-254 form the Biotinyl-binding domain; that stretch reads HPPLKSPMAG…SVDTPLFVIA (77 aa). At Lys-220 the chain carries N6-biotinyllysine.

In terms of assembly, acetyl-CoA carboxylase is a heterohexamer composed of biotin carboxyl carrier protein, biotin carboxylase and 2 subunits each of ACCase subunit alpha and ACCase plastid-coded subunit beta (accD). In terms of tissue distribution, primarily expressed in 7 to 10 days after flowering seeds at levels approximately 2-fold less abundant than BCCP1.

It is found in the plastid. The protein resides in the chloroplast. It participates in lipid metabolism; fatty acid biosynthesis. In terms of biological role, this protein is a component of the acetyl coenzyme A carboxylase complex; first, biotin carboxylase catalyzes the carboxylation of the carrier protein and then the transcarboxylase transfers the carboxyl group to form malonyl-CoA. The chain is Biotin carboxyl carrier protein of acetyl-CoA carboxylase 2, chloroplastic (BCCP2) from Arabidopsis thaliana (Mouse-ear cress).